The primary structure comprises 702 residues: BRCA1-associated RING domain protein 1 (702 aa).

An RING-type zinc finger spans residues 18–67 (CVKCKKPRGDLQYLGSSCKHAYCWECIATFQQKPSGKRSSVARHMCPSCA). Disordered regions lie at residues 153–205 (DENR…TSVK) and 281–346 (ASMS…YGTR). Over residues 174-188 (ASPTRNSTKRPSTVS) the composition is skewed to polar residues. Residues 312 to 321 (IKSDKIERRS) are compositionally biased toward basic and acidic residues. ANK repeat units lie at residues 347-376 (RGEAVLVNSIRNNRIPQLRSAVEAGTCVNE), 379-408 (DGKTPLYVAVENSSLEAVKILVEAGAVINA), and 413-442 (TLETTLHEAVRRQNTQIVEYLLSKGASIKI). One can recognise a BRCT domain in the interval 601 to 702 (MQPKLFAGCK…LGCSITTPPH (102 aa)).

Heterodimer (via RING-type zinc finger) with brc-1 to form the core CeBCD complex. Brc-1-brd-1 heterodimer-containing CeBCD complexes bound to chromatin are activated as an E3-ubiquitin ligase in response to DNA damage. The heterodimer interacts with the recombinase rad-51 following ionizing irradiation; the interaction is direct. The heterodimer interacts the E2-ubiquitin-conjugating enzyme let-70 following ionizing irradiation. The heterodimer interacts with the pro-crossover proteins msh-5 and syp-3. Interacts with smt-3, tac-1 and ubc-9. Autoubiquitinated. In terms of processing, phosphorylation of CeBCD complexes is required for E3 ubiquitin-protein ligase activity.

It localises to the cytoplasm. Its subcellular location is the nucleus. It is found in the chromosome. It carries out the reaction S-ubiquitinyl-[E2 ubiquitin-conjugating enzyme]-L-cysteine + [acceptor protein]-L-lysine = [E2 ubiquitin-conjugating enzyme]-L-cysteine + N(6)-ubiquitinyl-[acceptor protein]-L-lysine.. The protein operates within protein modification; protein ubiquitination. With respect to regulation, E3 ubiquitin-protein ligase activity of CeBCD complexes occurs at DNA damage sites. Following DNA damage, E3 ubiquitin-protein ligase activity is reduced by caffeine treatment (inhibitor of ATM and ATK kinase activity). Its function is as follows. Constituent of the CeBCD complex that possesses E3 ubiquitin-protein ligase activity. When bound to chromatin, the brc-1-brd-1 heterodimer within the CeBCD complex is inactive during normal conditions, but in response to DNA damage, the brc-1-brd-1 heterodimer associates with other proteins such as the recombinase rad-51 or the E2-ubiquitin-conjugating enzyme let-70, which activate the CeBCD complex as an E3-ubiquitin ligase. Moreover, association between the brc-1-brd-1 heterodimer and rad-51 and let-70, probably requires DNA checkpoint proteins such as atl-1 and mre-11 in order to induce ubiquitination at DNA damage sites. To this end, the brc-1-brd-1 heterodimer coordinates a diverse range of cellular pathways such as DNA damage repair, ubiquitination and transcriptional regulation to maintain genomic stability. Plays a role in triggering cellular responses at damage sites in response to DNA damage that may be induced by ionizing radiation for example. In particular, protects against chromosome non-disjunction and nuclear fragmentation during meiotic double-strand break repair to ensure sister chromatid recombination and aid chromosome stability. In Caenorhabditis elegans, this protein is BRCA1-associated RING domain protein 1.